The sequence spans 303 residues: Uricase (303 aa).

Catalysis depends on charge relay system residues Lys12 and Thr60. Urate-binding residues include Thr60, Asp61, Phe162, Arg179, Val234, Gln235, and Asn261. His263 (charge relay system) is an active-site residue. The Microbody targeting signal motif lies at 301-303 (TKL).

This sequence belongs to the uricase family.

The protein resides in the peroxisome. The enzyme catalyses urate + O2 + H2O = 5-hydroxyisourate + H2O2. It participates in purine metabolism; urate degradation; (S)-allantoin from urate: step 1/3. In terms of biological role, catalyzes the oxidation of uric acid to 5-hydroxyisourate, which is further processed to form (S)-allantoin. The protein is Uricase of Cyberlindnera jadinii (Torula yeast).